Here is a 363-residue protein sequence, read N- to C-terminus: tRNA dimethylallyltransferase (363 aa).

Residues 1-55 are unknown insert; the sequence is MLACNDDTSLYLLVKQVTKKEIYSNDLENGNVKRGASMQSLYLIGDPKCCRNNSS. Position 65-72 (65-72) interacts with ATP; that stretch reads GPTASGKS. A substrate-binding site is contributed by 67 to 72; the sequence is TASGKS. 2 interaction with substrate tRNA regions span residues 90–93 and 214–218; these read DSMQ and QRLIR.

It belongs to the IPP transferase family. As to quaternary structure, monomer. It depends on Mg(2+) as a cofactor.

It catalyses the reaction adenosine(37) in tRNA + dimethylallyl diphosphate = N(6)-dimethylallyladenosine(37) in tRNA + diphosphate. In terms of biological role, catalyzes the transfer of a dimethylallyl group onto the adenine at position 37 in tRNAs that read codons beginning with uridine, leading to the formation of N6-(dimethylallyl)adenosine (i(6)A). In Rickettsia conorii (strain ATCC VR-613 / Malish 7), this protein is tRNA dimethylallyltransferase.